Here is a 197-residue protein sequence, read N- to C-terminus: RNA pyrophosphohydrolase (197 aa).

In terms of domain architecture, Nudix hydrolase spans 6-149; it reads GYRPNVGIVI…KRDVYRKAMK (144 aa). A Nudix box motif is present at residues 38–59; it reads GGINDGETPEQAMYRELYEEVG. Residues 165–197 are disordered; the sequence is LSTNNNDEKKANYSAKKPYSPYRNQDKKRKTRV.

The protein belongs to the Nudix hydrolase family. RppH subfamily. A divalent metal cation is required as a cofactor.

Its function is as follows. Accelerates the degradation of transcripts by removing pyrophosphate from the 5'-end of triphosphorylated RNA, leading to a more labile monophosphorylated state that can stimulate subsequent ribonuclease cleavage. This chain is RNA pyrophosphohydrolase, found in Mannheimia succiniciproducens (strain KCTC 0769BP / MBEL55E).